The following is a 354-amino-acid chain: Uroporphyrinogen decarboxylase (354 aa).

Substrate contacts are provided by residues 25-29 (RQAGR), Asp-75, Tyr-152, Thr-207, and His-330.

This sequence belongs to the uroporphyrinogen decarboxylase family. Homodimer.

The protein resides in the cytoplasm. The enzyme catalyses uroporphyrinogen III + 4 H(+) = coproporphyrinogen III + 4 CO2. The protein operates within porphyrin-containing compound metabolism; protoporphyrin-IX biosynthesis; coproporphyrinogen-III from 5-aminolevulinate: step 4/4. Catalyzes the decarboxylation of four acetate groups of uroporphyrinogen-III to yield coproporphyrinogen-III. The sequence is that of Uroporphyrinogen decarboxylase from Xanthomonas euvesicatoria pv. vesicatoria (strain 85-10) (Xanthomonas campestris pv. vesicatoria).